The sequence spans 177 residues: Large ribosomal subunit protein uL6 (177 aa).

The protein belongs to the universal ribosomal protein uL6 family. Part of the 50S ribosomal subunit.

This protein binds to the 23S rRNA, and is important in its secondary structure. It is located near the subunit interface in the base of the L7/L12 stalk, and near the tRNA binding site of the peptidyltransferase center. This chain is Large ribosomal subunit protein uL6, found in Afipia carboxidovorans (strain ATCC 49405 / DSM 1227 / KCTC 32145 / OM5) (Oligotropha carboxidovorans).